Reading from the N-terminus, the 230-residue chain is Cytidylate kinase (230 aa).

ATP is bound at residue 12 to 20 (GPSGAGKGT).

Belongs to the cytidylate kinase family. Type 1 subfamily.

Its subcellular location is the cytoplasm. It carries out the reaction CMP + ATP = CDP + ADP. The enzyme catalyses dCMP + ATP = dCDP + ADP. The chain is Cytidylate kinase from Yersinia enterocolitica serotype O:8 / biotype 1B (strain NCTC 13174 / 8081).